Reading from the N-terminus, the 449-residue chain is Elongation factor 1-alpha C (449 aa).

The region spanning 5 to 234 is the tr-type G domain; that stretch reads KQHVSIVVIG…DACDPPKRPV (230 aa). The G1 stretch occupies residues 14–21; it reads GHVDSGKS. GTP is bound at residue 14–21; that stretch reads GHVDSGKS. Lys55 carries the N6,N6-dimethyllysine modification. The interval 70 to 74 is G2; that stretch reads GITID. Lys79 carries the N6,N6,N6-trimethyllysine modification. A G3 region spans residues 91–94; the sequence is DAPG. Residues 91-95 and 153-156 each bind GTP; these read DAPGH and NKMD. A G4 region spans residues 153-156; it reads NKMD. An N6,N6,N6-trimethyllysine modification is found at Lys187. Residues 194-196 form a G5 region; that stretch reads SGW. Lys265 carries the N6-methyllysine modification. Lys310 and Lys400 each carry N6,N6,N6-trimethyllysine.

Belongs to the TRAFAC class translation factor GTPase superfamily. Classic translation factor GTPase family. EF-Tu/EF-1A subfamily.

Its subcellular location is the cytoplasm. Its function is as follows. This protein promotes the GTP-dependent binding of aminoacyl-tRNA to the A-site of ribosomes during protein biosynthesis. In Porphyra purpurea (Red seaweed), this protein is Elongation factor 1-alpha C (TEF-C).